The following is an 887-amino-acid chain: Lateral signaling target protein 2 homolog (887 aa).

Residue K87 forms a Glycyl lysine isopeptide (Lys-Gly) (interchain with G-Cter in ubiquitin) linkage. The tract at residues 308–327 (PALSAPLPPEGPLSAKAKDP) is disordered. At S334 the chain carries Phosphoserine. Disordered regions lie at residues 354–396 (DEMS…GSDE) and 412–474 (ALAR…ASLA). The residue at position 516 (T516) is a Phosphothreonine. S586 is subject to Phosphoserine; by MAP2K. The disordered stretch occupies residues 599-714 (LAKASDRAPE…THAAPQATRE (116 aa)). The span at 602 to 612 (ASDRAPERQEE) shows a compositional bias: basic and acidic residues. A compositionally biased stretch (polar residues) spans 638-648 (TSGSQVDTASG). Low complexity-rich tracts occupy residues 681 to 693 (SGSSSSTAGSCSS) and 700 to 711 (AAPAATHAAPQA). The FYVE-type zinc finger occupies 817–879 (DEACGFCTAC…THCYMFHVTP (63 aa)). Positions 823, 826, 839, 842, 847, 850, and 869 each coordinate Zn(2+). The residue at position 870 (T870) is a Phosphothreonine; by MAP2K. Residue C872 participates in Zn(2+) binding.

It belongs to the lst-2 family. As to quaternary structure, interacts with TRIM3. Post-translationally, monoubiquitination at Lys-87 prevents binding to phosphatidylinositol 3-phosphate (PI3P) and localization to early endosome membranes.

The protein resides in the cytoplasm. The protein localises to the cytosol. Its subcellular location is the early endosome membrane. Negative regulator of epidermal growth factor receptor (EGFR) signaling. Acts by promoting EGFR degradation in endosomes when not monoubiquitinated. In Homo sapiens (Human), this protein is Lateral signaling target protein 2 homolog (ZFYVE28).